Consider the following 428-residue polypeptide: 3-phosphoshikimate 1-carboxyvinyltransferase (428 aa).

Lys-20, Ser-21, and Arg-25 together coordinate 3-phosphoshikimate. Phosphoenolpyruvate is bound at residue Lys-20. Residues Gly-92 and Arg-120 each coordinate phosphoenolpyruvate. 4 residues coordinate 3-phosphoshikimate: Ser-166, Gln-168, Asp-314, and Lys-341. Phosphoenolpyruvate is bound at residue Gln-168. The Proton acceptor role is filled by Asp-314. Phosphoenolpyruvate contacts are provided by Arg-345 and Arg-387.

It belongs to the EPSP synthase family. As to quaternary structure, monomer.

It is found in the cytoplasm. The enzyme catalyses 3-phosphoshikimate + phosphoenolpyruvate = 5-O-(1-carboxyvinyl)-3-phosphoshikimate + phosphate. The protein operates within metabolic intermediate biosynthesis; chorismate biosynthesis; chorismate from D-erythrose 4-phosphate and phosphoenolpyruvate: step 6/7. Functionally, catalyzes the transfer of the enolpyruvyl moiety of phosphoenolpyruvate (PEP) to the 5-hydroxyl of shikimate-3-phosphate (S3P) to produce enolpyruvyl shikimate-3-phosphate and inorganic phosphate. The chain is 3-phosphoshikimate 1-carboxyvinyltransferase from Listeria welshimeri serovar 6b (strain ATCC 35897 / DSM 20650 / CCUG 15529 / CIP 8149 / NCTC 11857 / SLCC 5334 / V8).